A 225-amino-acid polypeptide reads, in one-letter code: Movement and silencing protein TGBp1 (225 aa).

The (+)RNA virus helicase ATP-binding domain maps to 1–110 (MDFAELLESK…KDLLKPHYIC (110 aa)). The region spanning 111 to 225 (PTTHRFGHST…LTPDAPSTSS (115 aa)) is the (+)RNA virus helicase C-terminal domain.

It belongs to the Tymovirales TGBp1 protein family. In terms of assembly, homodimer and homooligomer. Interacts with capsid protein. Interacts with host AGO1; this interaction targets the host protein for degradation, thereby suppressing the antiviral RNA silencing.

It is found in the host cytoplasm. Functionally, transports viral genome to neighboring plant cells directly through plasmosdesmata, without any budding. The movement protein allows efficient cell to cell propagation, by bypassing the host cell wall barrier. Increases plasmodesma size exclusion limit. Acts as a suppressor of RNA-mediated gene silencing, also known as post-transcriptional gene silencing (PTGS), a mechanism of plant viral defense that limits the accumulation of viral RNAs. The protein is Movement and silencing protein TGBp1 of Citrus (ICRSV).